The primary structure comprises 208 residues: MSKVLFVKANDRTAEEAVSVKLYEAFLNSYKENHPNDEIVELDLYRENPPYLGRNAINGTFKAGKGMELNEDEKAAAAVADRYLDEFVKADKVVFAFPLWNFAVPAVLHTYVDYLSRAGVTFTYTPEGPKGLMGDKKVALLNARGGFYSEGPMAAMEMSLNYMKTVMGFFGVQDLHTVVIEGHNAVPDDAQKIIENGLAEAKKLAASF.

Belongs to the azoreductase type 1 family. As to quaternary structure, homodimer. FMN is required as a cofactor.

It carries out the reaction 2 a quinone + NADH + H(+) = 2 a 1,4-benzosemiquinone + NAD(+). It catalyses the reaction N,N-dimethyl-1,4-phenylenediamine + anthranilate + 2 NAD(+) = 2-(4-dimethylaminophenyl)diazenylbenzoate + 2 NADH + 2 H(+). Quinone reductase that provides resistance to thiol-specific stress caused by electrophilic quinones. Its function is as follows. Also exhibits azoreductase activity. Catalyzes the reductive cleavage of the azo bond in aromatic azo compounds to the corresponding amines. The sequence is that of FMN-dependent NADH:quinone oxidoreductase 1 from Bacillus licheniformis (strain ATCC 14580 / DSM 13 / JCM 2505 / CCUG 7422 / NBRC 12200 / NCIMB 9375 / NCTC 10341 / NRRL NRS-1264 / Gibson 46).